Reading from the N-terminus, the 1267-residue chain is RNA-directed RNA polymerase lambda-3 (1267 aa).

The 238-residue stretch at 555–792 (LSPTSGSAVI…KLYFIFGCRI (238 aa)) folds into the RdRp catalytic domain.

It belongs to the reoviridae RNA-directed RNA polymerase family.

The protein localises to the virion. It catalyses the reaction RNA(n) + a ribonucleoside 5'-triphosphate = RNA(n+1) + diphosphate. Its function is as follows. RNA-directed RNA polymerase that is involved in transcription and genome replication. Following infection, it catalyzes the synthesis of fully conservative plus strands. After core assembly, which consists in recruitment of one capped plus-strand for each genomic segments and polymerase complexes, the polymerase switches mode and catalyzes the synthesis of complementary minus-strands. The protein is RNA-directed RNA polymerase lambda-3 (L1) of Reovirus type 3 (strain Dearing) (T3D).